The primary structure comprises 712 residues: Saccharolysin (712 aa).

S73 carries the phosphoserine modification. A Zn(2+)-binding site is contributed by H501. The active site involves E502. Residues H505 and H508 each coordinate Zn(2+).

This sequence belongs to the peptidase M3 family. Zn(2+) is required as a cofactor.

It is found in the cytoplasm. It carries out the reaction Cleavage of Pro-|-Phe and Ala-|-Ala bonds.. Functionally, could be involved in late stage of protein degradation. This Saccharomyces cerevisiae (strain ATCC 204508 / S288c) (Baker's yeast) protein is Saccharolysin (PRD1).